Reading from the N-terminus, the 358-residue chain is Bis(monoacylglycero)phosphate synthase CLN5 (358 aa).

Over 1 to 23 the chain is Cytoplasmic; sequence MAQEVDTAQGAEMRRGAGAARGR. The chain crosses the membrane as a helical; Signal-anchor for type II membrane protein span at residues 24–40; it reads ASWCWALALLWLAVVPG. Topologically, residues 41–358 are lumenal; the sequence is WSRVSGIPSR…PIRNKTLSGL (318 aa). 2 disulfides stabilise this stretch: cysteine 70/cysteine 159 and cysteine 77/cysteine 165. Residue histidine 117 is the Proton acceptor of the active site. N-linked (GlcNAc...) asparagine glycans are attached at residues asparagine 130, asparagine 143, asparagine 178, and asparagine 203. Catalysis depends on cysteine 231, which acts as the Nucleophile; Acyl-thioester intermediate. N-linked (GlcNAc...) asparagine glycans are attached at residues asparagine 255, asparagine 271, and asparagine 281. The segment at 304–343 is membrane-anchoring; the sequence is FLLSLLQIFDAVIVHKQFYLFYNFEYWFLPMKFPFIKITY. Asparagine 352 carries an N-linked (GlcNAc...) asparagine glycan.

It belongs to the CLN5 family. In terms of assembly, multimer. Interacts with SORT1, RAB5A and RAB7A. Interacts with PPT1, TPP1, CLN3, CLN6, CLN8, ATP5F1A and ATP5F1B. In terms of processing, N-glycosylated with both high mannose and complex type sugars. Glycosylation is important for proper folding and trafficking to the lysosomes. The type II membrane signal anchor is proteolytically cleaved to produce a mature form that is transported to the lysosomes (Bis(monoacylglycero)phosphate synthase CLN5, secreted form). Post-translationally, can undergo proteolytic cleavage at the C-terminus, probably by a cysteine protease and may involve the removal of approximately 10-15 residues from the C-terminal end. As to expression, ubiquitous.

The protein resides in the lysosome. Its subcellular location is the membrane. The enzyme catalyses S-hexadecanoyl-L-cysteinyl-[protein] + H2O = L-cysteinyl-[protein] + hexadecanoate + H(+). It catalyses the reaction 2 1-acyl-sn-glycero-3-phospho-(1'-sn-glycerol) = 1-acyl-sn-glycero-3-phospho-(3'-acyl-sn-1'-glycerol) + sn-glycero-3-phospho-(1'-sn-glycerol). It carries out the reaction 2 1-(9Z-octadecenoyl)-sn-glycero-3-phospho-(1'-sn-glycerol) = 1-(9Z-octadecenoyl)-sn-glycero-3-phospho-(3'-(9Z-octadecenoyl)-1'-sn-glycerol) + sn-glycero-3-phospho-(1'-sn-glycerol). The catalysed reaction is 2 1-octadecanoyl-sn-glycero-3-phospho-(1'-sn-glycerol) = 1-octadecanoyl-sn-glycero-3-phospho-(3'-octadecanoyl-1'-sn-glycerol) + sn-glycero-3-phospho-(1'-sn-glycerol). The enzyme catalyses 2 1-hexadecanoyl-sn-glycero-3-phospho-(1'-sn-glycerol) = 1-hexadecanoyl-sn-glycero-3-phospho-(3'-hexadecanoyl-1'-sn-glycerol) + sn-glycero-3-phospho-(1'-sn-glycerol). It catalyses the reaction 2 1-tetradecanoyl-sn-glycero-3-phospho-(1'-sn-glycerol) = 1-tetradecanoyl-sn-glycero-3-phospho-(3'-tetradecanoyl-1'-sn-glycerol) + sn-glycero-3-phospho-(1'-sn-glycerol). With respect to regulation, anionic phospholipids activate bis(monoacylglycero)phosphate (BMP) synthase activity. Amiodarone, a cationic amphiphilic drug inhibits BMP synthase activity towards liposomal lysophosphatidylglycerol. Palmostatin B inhibits palmitoyl protein thioesterase activity. In terms of biological role, catalyzes the synthesis of bis(monoacylglycero)phosphate (BMP) via transacylation of 2 molecules of lysophosphatidylglycerol (LPG). BMP also known as lysobisphosphatidic acid plays a key role in the formation of intraluminal vesicles and in maintaining intracellular cholesterol homeostasis. Can use only LPG as the exclusive lysophospholipid acyl donor for base exchange and displays BMP synthase activity towards various LPGs (LPG 14:0, LPG 16:0, LPG 18:0, LPG 18:1) with a higher preference for longer chain lengths. Plays a role in influencing the retrograde trafficking of lysosomal sorting receptors SORT1 and IGF2R from the endosomes to the trans-Golgi network by controlling the recruitment of retromer complex to the endosomal membrane. Regulates the localization and activation of RAB7A which is required to recruit the retromer complex to the endosomal membrane. Functionally, exhibits palmitoyl protein thioesterase (S-depalmitoylation) activity in vitro and most likely plays a role in protein S-depalmitoylation. This chain is Bis(monoacylglycero)phosphate synthase CLN5 (CLN5), found in Homo sapiens (Human).